Consider the following 157-residue polypeptide: Transcriptional regulator MraZ (157 aa).

2 SpoVT-AbrB domains span residues 7–52 (TYTM…AGGN) and 83–126 (SETL…EPER).

Belongs to the MraZ family. In terms of assembly, forms oligomers.

The protein localises to the cytoplasm. Its subcellular location is the nucleoid. The sequence is that of Transcriptional regulator MraZ from Xanthobacter autotrophicus (strain ATCC BAA-1158 / Py2).